A 395-amino-acid polypeptide reads, in one-letter code: MEKALLLYSGGLDTSVMVRWIKEKMNMDVVTLTLDIGNSDLEEIKEKALKLGAIDAITLDVKKEFADNYISREIHANGLYGEYPLSTALARPLMAEKAVSVANENDIKFIAHGSTGKGNDQVRFEVSINALDNNIKVIAPVREWNMTRADELEYAKMNNIYVKSDGKYSVDENIWGRSIEGSSIENINEPVNDDAFEWVTPPQYCGSGEPVSIEFYKGLPSSLNGKSMDLLSIIKNLNIIAGRNGIGIINMIESRLIGLKSHEVYECPAASVILKAHKYLENLILNKNELSVKNYIDNFWSNMVYNGLWFDPSMEHMNQFEKSSNQYITGSVNLRLYRGNMILEGIESPYSLYDYNTINYETGVFDQGSSKGFIDIYKNETVRSNRVKKALTVIH.

ATP is bound at residue 7 to 15; sequence LYSGGLDTS. Y83 contributes to the L-citrulline binding site. G113 is a binding site for ATP. T115, N119, and D120 together coordinate L-aspartate. N119 serves as a coordination point for L-citrulline. The L-citrulline site is built by R123, S169, S178, E253, and Y265.

It belongs to the argininosuccinate synthase family. Type 1 subfamily. As to quaternary structure, homotetramer.

Its subcellular location is the cytoplasm. The enzyme catalyses L-citrulline + L-aspartate + ATP = 2-(N(omega)-L-arginino)succinate + AMP + diphosphate + H(+). The protein operates within amino-acid biosynthesis; L-arginine biosynthesis; L-arginine from L-ornithine and carbamoyl phosphate: step 2/3. The sequence is that of Argininosuccinate synthase from Picrophilus torridus (strain ATCC 700027 / DSM 9790 / JCM 10055 / NBRC 100828 / KAW 2/3).